We begin with the raw amino-acid sequence, 1153 residues long: Duffy receptor beta form (1153 aa).

A signal peptide spans 1 to 21 (MEGKKKRPLFFLLVLLLSHKA). Topologically, residues 22 to 1085 (NNVLFERMKG…YECFTKGSST (1064 aa)) are extracellular. Residues asparagine 134, asparagine 179, and asparagine 202 are each glycosylated (N-linked (GlcNAc...) asparagine). Disulfide bonds link cysteine 214–cysteine 243 and cysteine 227–cysteine 234. Residues asparagine 252 and asparagine 348 are each glycosylated (N-linked (GlcNAc...) asparagine). Cystine bridges form between cysteine 297-cysteine 374, cysteine 412-cysteine 429, cysteine 424-cysteine 504, and cysteine 433-cysteine 502. 2 N-linked (GlcNAc...) asparagine glycosylation sites follow: asparagine 430 and asparagine 467. Disordered stretches follow at residues 520-545 (LKSA…GAEK), 565-591 (DEAA…DNIE), 612-631 (RGAT…SYSG), and 655-981 (ENSE…LYSH). Composition is skewed to polar residues over residues 531-542 (SHSTIQPMSSSG) and 574-586 (NGNQ…NIKG). Residues asparagine 576 and asparagine 626 are each glycosylated (N-linked (GlcNAc...) asparagine). Positions 661 to 675 (LETKHKIFEPSKDNS) are enriched in basic and acidic residues. A compositionally biased stretch (polar residues) spans 677-733 (NSENSGSMEFKATSSNPITEAVESSSAEGQVQEDSAHRSVNTGRDNSTISAATSDDG). N-linked (GlcNAc...) asparagine glycosylation is present at asparagine 722. Residues 791–800 (IDGKNVDIAE) show a composition bias toward basic and acidic residues. A compositionally biased stretch (polar residues) spans 819-834 (TDNGNVPRSGNKQNEG). Residues asparagine 847 and asparagine 856 are each glycosylated (N-linked (GlcNAc...) asparagine). A compositionally biased stretch (basic and acidic residues) spans 867-878 (GNEKDFQKHDFM). Residues 884-942 (NDQTSSDQTSSDQTSSNQTSSDQTSSNQTSSDQTSSDQISSDQTSSDQTSSNQTSSDQT) show a composition bias toward low complexity. Residues asparagine 900, asparagine 910, and asparagine 935 are each glycosylated (N-linked (GlcNAc...) asparagine). The span at 945-969 (TEEHHRDNVRNPEIKSSEDMSKGDF) shows a compositional bias: basic and acidic residues. Residues 971 to 981 (RNSNSNELYSH) show a composition bias toward polar residues. A helical transmembrane segment spans residues 1086–1106 (GIGIVYFATGGAFLIILLLFV). At 1107–1153 (SKNVASNDYEEEATFDEFVEYSDDIHRTPLMPNHIEHMQQFTPLDYS) the chain is on the cytoplasmic side.

It is found in the membrane. Functionally, binds to Neu5Gc-sialylated receptors on macaque erythrocytes. The sequence is that of Duffy receptor beta form from Plasmodium knowlesi.